The primary structure comprises 968 residues: Isoleucine--tRNA ligase (968 aa).

A 'HIGH' region motif is present at residues 68–78 (PYANGALHMGH). Glu-582 lines the L-isoleucyl-5'-AMP pocket. Residues 623-627 (KMSKS) carry the 'KMSKS' region motif. Residue Lys-626 coordinates ATP. 4 residues coordinate Zn(2+): Cys-936, Cys-939, Cys-956, and Cys-959.

This sequence belongs to the class-I aminoacyl-tRNA synthetase family. IleS type 1 subfamily. Monomer. The cofactor is Zn(2+).

It localises to the cytoplasm. It catalyses the reaction tRNA(Ile) + L-isoleucine + ATP = L-isoleucyl-tRNA(Ile) + AMP + diphosphate. Catalyzes the attachment of isoleucine to tRNA(Ile). As IleRS can inadvertently accommodate and process structurally similar amino acids such as valine, to avoid such errors it has two additional distinct tRNA(Ile)-dependent editing activities. One activity is designated as 'pretransfer' editing and involves the hydrolysis of activated Val-AMP. The other activity is designated 'posttransfer' editing and involves deacylation of mischarged Val-tRNA(Ile). The chain is Isoleucine--tRNA ligase from Prochlorococcus marinus (strain AS9601).